We begin with the raw amino-acid sequence, 40 residues long: Photosystem II reaction center protein T (40 aa).

The helical transmembrane segment at alanine 3–phenylalanine 23 threads the bilayer.

This sequence belongs to the PsbT family. As to quaternary structure, PSII is composed of 1 copy each of membrane proteins PsbA, PsbB, PsbC, PsbD, PsbE, PsbF, PsbH, PsbI, PsbJ, PsbK, PsbL, PsbM, PsbT, PsbY, PsbZ, Psb30/Ycf12, at least 3 peripheral proteins of the oxygen-evolving complex and a large number of cofactors. It forms dimeric complexes.

The protein resides in the plastid. It is found in the chloroplast thylakoid membrane. In terms of biological role, found at the monomer-monomer interface of the photosystem II (PS II) dimer, plays a role in assembly and dimerization of PSII. PSII is a light-driven water plastoquinone oxidoreductase, using light energy to abstract electrons from H(2)O, generating a proton gradient subsequently used for ATP formation. The polypeptide is Photosystem II reaction center protein T (Anthoceros angustus (Hornwort)).